We begin with the raw amino-acid sequence, 421 residues long: O-acetyl-L-homoserine sulfhydrylase 1 (421 aa).

At K206 the chain carries N6-(pyridoxal phosphate)lysine.

This sequence belongs to the trans-sulfuration enzymes family. As to quaternary structure, homotetramer. The cofactor is pyridoxal 5'-phosphate.

The enzyme catalyses O-acetyl-L-homoserine + hydrogen sulfide = L-homocysteine + acetate. The protein operates within amino-acid biosynthesis; L-methionine biosynthesis via de novo pathway; L-homocysteine from O-acetyl-L-homoserine: step 1/1. Its activity is regulated as follows. Inhibited by the carbonyl reagents hydroxylamine and phenylhydrazine. Also inhibited by methionine and propargylglycine. Functionally, catalyzes the conversion of O-acetyl-L-homoserine (OAH) into homocysteine in the methionine biosynthesis pathway. Has weak activity with O-acetyl-L-serine, O-phospho-L-serine, L-serine, O-succinyl-L-homoserine and L-homoserine. Shows low CTT beta-lyase activity and very low CTT gamma-synthase activity. The polypeptide is O-acetyl-L-homoserine sulfhydrylase 1 (Thermus thermophilus (strain ATCC 27634 / DSM 579 / HB8)).